The chain runs to 457 residues: Multidrug resistance protein MdtK (457 aa).

Helical transmembrane passes span 11–31, 53–73, 93–113, 127–147, 160–180, 188–208, 243–263, 276–296, 314–334, 350–370, 387–407, and 418–438; these read LLAL…MGFV, IWLP…PVIA, WLAG…GYII, AVGY…FQVA, GMVM…IFIY, LGGI…FIAM, LPIA…ALLV, IALN…AAVT, AART…IFTV, VVAL…SDSI, IFFI…YILA, and PAGF…LMML.

It belongs to the multi antimicrobial extrusion (MATE) (TC 2.A.66.1) family. MdtK subfamily.

The protein resides in the cell inner membrane. In terms of biological role, multidrug efflux pump that functions probably as a Na(+)/drug antiporter. This Salmonella heidelberg (strain SL476) protein is Multidrug resistance protein MdtK.